We begin with the raw amino-acid sequence, 109 residues long: Putative small proline-rich protein 2J (109 aa).

Tandem repeats lie at residues 21–29 (RSAQSPVLC), 30–38 (QSAPSLVLL), 39–47 (QSAQSPIHC), 48–56 (QSALSHAHL), and 57–65 (SHASRNALL). A 5 X 9 AA approximate tandem repeats region spans residues 21-65 (RSAQSPVLCQSAPSLVLLQSAQSPIHCQSALSHAHLSHASRNALL). Residues 76–109 (AHPRANKGFSSLQNQKKRTESILHKSIATPPSSI) are disordered.

It belongs to the cornifin (SPRR) family. Not expressed in uterus.

The protein resides in the cytoplasm. Cross-linked envelope protein of keratinocytes. It is a keratinocyte protein that first appears in the cell cytosol, but ultimately becomes cross-linked to membrane proteins by transglutaminase. All that results in the formation of an insoluble envelope beneath the plasma membrane. This Mus musculus (Mouse) protein is Putative small proline-rich protein 2J (Sprr2j).